Reading from the N-terminus, the 159-residue chain is Transcriptional repressor NrdR (159 aa).

The disordered stretch occupies residues 1–21 (MRCPKCQHNKSNVIDSRQAED). A zinc finger spans residues 3-34 (CPKCQHNKSNVIDSRQAEDGNTIRRRRECDAC). Residues 49–139 (LLVVKKDGTR…VYRSFKDVDE (91 aa)) enclose the ATP-cone domain.

Belongs to the NrdR family. Requires Zn(2+) as cofactor.

Its function is as follows. Negatively regulates transcription of bacterial ribonucleotide reductase nrd genes and operons by binding to NrdR-boxes. The protein is Transcriptional repressor NrdR of Streptococcus thermophilus (strain CNRZ 1066).